The sequence spans 257 residues: UPF0246 protein YaaA (257 aa).

Belongs to the UPF0246 family.

This is UPF0246 protein YaaA from Salmonella arizonae (strain ATCC BAA-731 / CDC346-86 / RSK2980).